Here is a 304-residue protein sequence, read N- to C-terminus: MSGIPDPQRVGRVAVLMGGTSAERDISLRSGGAILAALQRCGYDAEAYDPRDRALEGLRGYDVVFIALHGRGGEDGTVQGLLDLLGIPYTGSGVLGSALGMDKWRCKRLWQGSGLPTPAGQLLTGDRPVLDEGVGYPVIVKPAREGSSLGMSRVEGPEELAEAYRVAAAYDDTVLAEAWVEGEEYTVALLGDQALPSIRLETPHAFFDYAAKYQAEDTGHHCPSGLGPEEEAELGALCREAFIASGGNGWGRVDVMRDTGGRWWLLEVNTIPGMTDHSLVPIAAAQAGIGFDELVARILGEALR.

The ATP-grasp domain maps to 107–300 (KRLWQGSGLP…FDELVARILG (194 aa)). An ATP-binding site is contributed by 134-186 (VGYPVIVKPAREGSSLGMSRVEGPEELAEAYRVAAAYDDTVLAEAWVEGEEYT). Residues Asp-254, Glu-267, and Asn-269 each coordinate Mg(2+).

The protein belongs to the D-alanine--D-alanine ligase family. It depends on Mg(2+) as a cofactor. The cofactor is Mn(2+).

The protein localises to the cytoplasm. It catalyses the reaction 2 D-alanine + ATP = D-alanyl-D-alanine + ADP + phosphate + H(+). It participates in cell wall biogenesis; peptidoglycan biosynthesis. Cell wall formation. The protein is D-alanine--D-alanine ligase of Halorhodospira halophila (strain DSM 244 / SL1) (Ectothiorhodospira halophila (strain DSM 244 / SL1)).